The sequence spans 206 residues: Thymidylate kinase (206 aa).

10-17 is an ATP binding site; that stretch reads GIDGAGKS.

Belongs to the thymidylate kinase family.

The catalysed reaction is dTMP + ATP = dTDP + ADP. In terms of biological role, phosphorylation of dTMP to form dTDP in both de novo and salvage pathways of dTTP synthesis. The polypeptide is Thymidylate kinase (Neisseria meningitidis serogroup C / serotype 2a (strain ATCC 700532 / DSM 15464 / FAM18)).